The primary structure comprises 145 residues: D-aminoacyl-tRNA deacylase (145 aa).

A Gly-cisPro motif, important for rejection of L-amino acids motif is present at residues 137–138 (GP).

Belongs to the DTD family. In terms of assembly, homodimer.

The protein resides in the cytoplasm. It carries out the reaction glycyl-tRNA(Ala) + H2O = tRNA(Ala) + glycine + H(+). The catalysed reaction is a D-aminoacyl-tRNA + H2O = a tRNA + a D-alpha-amino acid + H(+). Functionally, an aminoacyl-tRNA editing enzyme that deacylates mischarged D-aminoacyl-tRNAs. Also deacylates mischarged glycyl-tRNA(Ala), protecting cells against glycine mischarging by AlaRS. Acts via tRNA-based rather than protein-based catalysis; rejects L-amino acids rather than detecting D-amino acids in the active site. By recycling D-aminoacyl-tRNA to D-amino acids and free tRNA molecules, this enzyme counteracts the toxicity associated with the formation of D-aminoacyl-tRNA entities in vivo and helps enforce protein L-homochirality. In Shewanella halifaxensis (strain HAW-EB4), this protein is D-aminoacyl-tRNA deacylase.